We begin with the raw amino-acid sequence, 258 residues long: Triosephosphate isomerase (258 aa).

9–11 is a substrate binding site; it reads NWK. Residue His105 is the Electrophile of the active site. Glu176 serves as the catalytic Proton acceptor. Substrate is bound by residues Gly182 and Ser214.

Belongs to the triosephosphate isomerase family. Homodimer.

It is found in the cytoplasm. It catalyses the reaction D-glyceraldehyde 3-phosphate = dihydroxyacetone phosphate. Its pathway is carbohydrate biosynthesis; gluconeogenesis. It participates in carbohydrate degradation; glycolysis; D-glyceraldehyde 3-phosphate from glycerone phosphate: step 1/1. Involved in the gluconeogenesis. Catalyzes stereospecifically the conversion of dihydroxyacetone phosphate (DHAP) to D-glyceraldehyde-3-phosphate (G3P). This chain is Triosephosphate isomerase, found in Mycoplasmopsis agalactiae (strain NCTC 10123 / CIP 59.7 / PG2) (Mycoplasma agalactiae).